Reading from the N-terminus, the 230-residue chain is Large ribosomal subunit protein uL1 (230 aa).

Belongs to the universal ribosomal protein uL1 family. As to quaternary structure, part of the 50S ribosomal subunit.

In terms of biological role, binds directly to 23S rRNA. The L1 stalk is quite mobile in the ribosome, and is involved in E site tRNA release. Functionally, protein L1 is also a translational repressor protein, it controls the translation of the L11 operon by binding to its mRNA. This is Large ribosomal subunit protein uL1 from Bradyrhizobium sp. (strain BTAi1 / ATCC BAA-1182).